The chain runs to 289 residues: Rhodopsin (289 aa).

Residues 1–7 lie on the Extracellular side of the membrane; sequence YLVNPAA. The chain crosses the membrane as a helical span at residues 8-32; that stretch reads YAAPGAYMFLLILVGFPVNFLTLYV. Residues 33-44 are Cytoplasmic-facing; it reads TLEHKKLRTPLN. The helical transmembrane segment at 45–67 threads the bilayer; the sequence is YILLNLAVADLFMVLGGFTTTMY. The Extracellular portion of the chain corresponds to 68 to 81; the sequence is TSMHGYFVLGRLGC. A disulfide bond links Cys-81 and Cys-158. A helical transmembrane segment spans residues 82–104; that stretch reads NLEGFFATLGGEIALWSLVVLAI. Residues 105–107 carry the 'Ionic lock' involved in activated form stabilization motif; that stretch reads ERW. Residues 105 to 123 lie on the Cytoplasmic side of the membrane; the sequence is ERWIVVCKPISNFRFTEDH. Residues 124–144 form a helical membrane-spanning segment; that stretch reads AIMGLAFSWVMALTCAVPPLV. At 145–173 the chain is on the extracellular side; that stretch reads GWSRYIPEGMQCSCGVDYYTRAEGFNNES. Asn-171 is a glycosylation site (N-linked (GlcNAc...) asparagine). Residues 174–195 form a helical membrane-spanning segment; it reads FVIYMFIVHFLIPLSNNFFCYG. Over 196 to 223 the chain is Cytoplasmic; the sequence is RLLCAVKEAAAAQQESETTQRAEREVSR. The chain crosses the membrane as a helical span at residues 224 to 245; that stretch reads MVVMMVVSFLMCWLPYASVAWY. The Extracellular portion of the chain corresponds to 246-257; the sequence is IFCNQGSEFGPI. The chain crosses the membrane as a helical span at residues 258-279; that stretch reads FMTLPAFFAKSSAIYNPLIYIC. Position 267 is an N6-(retinylidene)lysine (Lys-267). Residues 280–289 lie on the Cytoplasmic side of the membrane; it reads MNKHVRHCMI.

Belongs to the G-protein coupled receptor 1 family. Opsin subfamily. Post-translationally, phosphorylated on some or all of the serine and threonine residues present in the C-terminal region. In terms of processing, contains one covalently linked retinal chromophore.

It is found in the membrane. The protein resides in the cell projection. It localises to the cilium. Its subcellular location is the photoreceptor outer segment. Its function is as follows. Photoreceptor required for image-forming vision at low light intensity. While most salt water fish species use retinal as chromophore, most freshwater fish use 3-dehydroretinal, or a mixture of retinal and 3-dehydroretinal. Light-induced isomerization of 11-cis to all-trans retinal triggers a conformational change that activates signaling via G-proteins. Subsequent receptor phosphorylation mediates displacement of the bound G-protein alpha subunit by arrestin and terminates signaling. This Cottocomephorus grewingkii (Baikal yellowfin) protein is Rhodopsin (rho).